The following is a 1622-amino-acid chain: Transient receptor potential cation channel subfamily M member 1 (1622 aa).

5 disordered regions span residues 1-25 (MGSM…GSQK), 64-95 (PPLP…KHTQ), 450-490 (LAPP…EVEE), 618-641 (LGME…EEEI), and 822-856 (SKEN…HKKQ). Topologically, residues 1–875 (MGSMRKMSSS…CEFYNAPIVK (875 aa)) are cytoplasmic. Over residues 8 to 25 (SSSFKRGSIKSSTSGSQK) the composition is skewed to low complexity. The segment covering 70 to 95 (APSTTGEDTKQADTQSGKWSVSKHTQ) has biased composition (polar residues). Residues 472-483 (GRGKGKGKKKGK) are compositionally biased toward basic residues. 2 stretches are compositionally biased toward basic and acidic residues: residues 823–832 (KENEDGKEKE) and 843–853 (GSRKGDEENEH). Residues 876–896 (FWFYTISYLGYLLLFNYVILV) traverse the membrane as a helical segment. Over 897-942 (RMDGWPSPQEWIVISYIVSLALEKIREILMSEPGKLSQKIKVWLQE) the chain is Extracellular. A helical transmembrane segment spans residues 943-963 (YWNITDLVAISMFMVGAILRL). At 964 to 973 (QSQPYMGYGR) the chain is on the cytoplasmic side. Residues 974 to 994 (VIYCVDIILWYIRVLDIFGVN) traverse the membrane as a helical segment. The Extracellular segment spans residues 995–1006 (KYLGPYVMMIGK). The chain crosses the membrane as a helical span at residues 1007–1027 (MMIDMLYFVVIMLVVLMSFGV). Residues 1028–1099 (ARQAILHPEE…CIPGAWLTPA (72 aa)) are Cytoplasmic-facing. The chain crosses the membrane as a helical span at residues 1100 to 1120 (LMACYLLVANILLVNLLIAVF). N-linked (GlcNAc...) asparagine glycosylation is present at Asn-1121. The Extracellular segment spans residues 1121–1150 (NNTFFEVKSISNQVWKFQRYQLIMTFHDRP). Residues 1151–1171 (VLPPPMIILSHIYIIIMRLSG) form a helical membrane-spanning segment. Over 1172–1622 (RCRKKREGDQ…QEKRSAETEC (451 aa)) the chain is Cytoplasmic. The stretch at 1224–1252 (DERIRVTSERVENMSMRLEEINERENFMK) forms a coiled coil. Disordered stretches follow at residues 1354–1383 (EDAK…RSRL), 1389–1408 (LSTE…EFDP), and 1567–1622 (CLRS…ETEC). The segment covering 1613–1622 (QEKRSAETEC) has biased composition (basic and acidic residues).

It belongs to the transient receptor (TC 1.A.4) family. LTrpC subfamily. TRPM1 sub-subfamily. In terms of assembly, homodimer. Interacts with TRPM3; the interaction results in the formation of a heteromultimeric cation channel complex that are functionally different from the homomeric channels. Interacts with GPR179. Associates with both guanine nucleotide-binding proteins G(o) and beta-gamma G protein dimer; implicated in directly regulating TRPM1 channel open-state. As to expression, expressed in the retina where it localizes on dendritic tips of ON bipolar cells. Specifically, it is expressed in retinal bipolar cells (BPCs) of the ON subtype. Not detected in brain, lung, liver, heart, kidney, spleen or small intestine. Also expressed at high levels in poorly metastatic variants of B16 melanoma and at much reduced levels in highly metastatic variants of B16 melanoma.

Its subcellular location is the cell membrane. It localises to the endoplasmic reticulum membrane. The protein localises to the cell projection. The protein resides in the axon. It catalyses the reaction Ca(2+)(in) = Ca(2+)(out). The catalysed reaction is Mg(2+)(in) = Mg(2+)(out). It carries out the reaction Mn(2+)(in) = Mn(2+)(out). The enzyme catalyses Ni(2+)(in) = Ni(2+)(out). Its activity is regulated as follows. Inhibited by extracellular zinc ions. Inhibited by intracellular Mg(2+). Activated by the neuroactive steroid pregnenolone sulfate. Negatively regulated by activation of GRM6 receptors in the ON-bipolar cells. In terms of biological role, constitutively open nonselective divalent cation-conducting channels which mediate the influx of Ca(2+), Mg(2+), Mn(2+), Ba(2+), and Ni(2+) into the cytoplasm, leading to membrane depolarization. Impermeable to zinc ions. In addition, forms heteromultimeric ion channels with TRPM3 which are permeable for calcium and zinc ions. Plays an essential role for the depolarizing photoresponse of retinal ON bipolar cells. In the dark, tonic release of glutamate activates the G-protein coupled receptor for glutamate (GRM6), its activation induces the release of G(o) and the beta-gamma G protein dimer. Both subunits can interact and inactivate the TRPM1 channel. A light onset, induces decrease in glutamate release and deactivation of GRM6 leading to channel opening and membrane depolarization. May play a role in metastasis suppression. The sequence is that of Transient receptor potential cation channel subfamily M member 1 from Mus musculus (Mouse).